The sequence spans 408 residues: Serine/threonine transporter SstT (408 aa).

Helical transmembrane passes span 11-31, 43-63, 82-102, 141-161, 192-212, 216-236, 290-310, 316-336, and 363-383; these read LANG…VSLA, FLGS…VFIL, IVVL…VLSM, ALMT…GLAL, IGIF…AIAG, LLAV…PLIV, IPLG…VLTL, LGIQ…AISA, and VAMQ…AAET.

This sequence belongs to the dicarboxylate/amino acid:cation symporter (DAACS) (TC 2.A.23) family.

It localises to the cell inner membrane. The catalysed reaction is L-serine(in) + Na(+)(in) = L-serine(out) + Na(+)(out). It carries out the reaction L-threonine(in) + Na(+)(in) = L-threonine(out) + Na(+)(out). Its function is as follows. Involved in the import of serine and threonine into the cell, with the concomitant import of sodium (symport system). The sequence is that of Serine/threonine transporter SstT from Shewanella sp. (strain ANA-3).